Here is a 505-residue protein sequence, read N- to C-terminus: AMP phosphorylase (505 aa).

AMP-binding positions include Gly-170, 196–201, and Thr-205; that span reads SRAITS. Asp-258 acts as the Proton donor in catalysis. 2 residues coordinate AMP: Ser-266 and Lys-290.

The protein belongs to the thymidine/pyrimidine-nucleoside phosphorylase family. Type 2 subfamily.

The catalysed reaction is AMP + phosphate = alpha-D-ribose 1,5-bisphosphate + adenine. The enzyme catalyses CMP + phosphate = cytosine + alpha-D-ribose 1,5-bisphosphate. It catalyses the reaction UMP + phosphate = alpha-D-ribose 1,5-bisphosphate + uracil. Its function is as follows. Catalyzes the conversion of AMP and phosphate to adenine and ribose 1,5-bisphosphate (R15P). Exhibits phosphorylase activity toward CMP and UMP in addition to AMP. Functions in an archaeal AMP degradation pathway, together with R15P isomerase and RubisCO. This Methanococcus maripaludis (strain C5 / ATCC BAA-1333) protein is AMP phosphorylase.